Reading from the N-terminus, the 101-residue chain is MIPGEIIPVQGDIELNKGLPTVTLKVANSGDRPIQVGSHYHFFETNEGLKFDREQTRGMRLDIAAGTAMRFEPGQERDVTLVPLGGKREVYGFQQKVMGKL.

The protein belongs to the urease beta subunit family. As to quaternary structure, heterotrimer of UreA (gamma), UreB (beta) and UreC (alpha) subunits. Three heterotrimers associate to form the active enzyme.

Its subcellular location is the cytoplasm. It carries out the reaction urea + 2 H2O + H(+) = hydrogencarbonate + 2 NH4(+). The protein operates within nitrogen metabolism; urea degradation; CO(2) and NH(3) from urea (urease route): step 1/1. The protein is Urease subunit beta of Mesorhizobium japonicum (strain LMG 29417 / CECT 9101 / MAFF 303099) (Mesorhizobium loti (strain MAFF 303099)).